Consider the following 273-residue polypeptide: Vitamin B12-binding protein (273 aa).

Residues 1–18 (MMKTLSSLLLLFSVSLQA) form the signal peptide. A Fe/B12 periplasmic-binding domain is found at 23–273 (RVISLAPHAT…EHFASIEQKR (251 aa)). Cysteine 183 and cysteine 263 form a disulfide bridge.

The protein belongs to the BtuF family. As to quaternary structure, the complex is composed of two ATP-binding proteins (BtuD), two transmembrane proteins (BtuC) and a solute-binding protein (BtuF).

It is found in the periplasm. Its function is as follows. Part of the ABC transporter complex BtuCDF involved in vitamin B12 import. Binds vitamin B12 and delivers it to the periplasmic surface of BtuC. This is Vitamin B12-binding protein from Vibrio vulnificus (strain YJ016).